The following is a 290-amino-acid chain: Acetyl-coenzyme A carboxylase carboxyl transferase subunit beta (290 aa).

The region spanning 27–290 (LWIKCPSCEA…LTRQPADAVA (264 aa)) is the CoA carboxyltransferase N-terminal domain. 4 residues coordinate Zn(2+): Cys-31, Cys-34, Cys-50, and Cys-53. The segment at 31–53 (CPSCEAVLYRNDVEANLHVCPKC) adopts a C4-type zinc-finger fold.

Belongs to the AccD/PCCB family. As to quaternary structure, acetyl-CoA carboxylase is a heterohexamer composed of biotin carboxyl carrier protein (AccB), biotin carboxylase (AccC) and two subunits each of ACCase subunit alpha (AccA) and ACCase subunit beta (AccD). Zn(2+) is required as a cofactor.

The protein resides in the cytoplasm. It carries out the reaction N(6)-carboxybiotinyl-L-lysyl-[protein] + acetyl-CoA = N(6)-biotinyl-L-lysyl-[protein] + malonyl-CoA. It functions in the pathway lipid metabolism; malonyl-CoA biosynthesis; malonyl-CoA from acetyl-CoA: step 1/1. Functionally, component of the acetyl coenzyme A carboxylase (ACC) complex. Biotin carboxylase (BC) catalyzes the carboxylation of biotin on its carrier protein (BCCP) and then the CO(2) group is transferred by the transcarboxylase to acetyl-CoA to form malonyl-CoA. In Paraburkholderia phymatum (strain DSM 17167 / CIP 108236 / LMG 21445 / STM815) (Burkholderia phymatum), this protein is Acetyl-coenzyme A carboxylase carboxyl transferase subunit beta.